The primary structure comprises 138 residues: Large ribosomal subunit protein uL16 (138 aa).

Positions 1 to 19 (MLIPRKVKHRKQHHPKKKG) are enriched in basic residues. Positions 1 to 24 (MLIPRKVKHRKQHHPKKKGTASGG) are disordered.

This sequence belongs to the universal ribosomal protein uL16 family. In terms of assembly, part of the 50S ribosomal subunit.

Functionally, binds 23S rRNA and is also seen to make contacts with the A and possibly P site tRNAs. This Mycobacteroides abscessus (strain ATCC 19977 / DSM 44196 / CCUG 20993 / CIP 104536 / JCM 13569 / NCTC 13031 / TMC 1543 / L948) (Mycobacterium abscessus) protein is Large ribosomal subunit protein uL16.